Consider the following 498-residue polypeptide: ATP synthase subunit alpha 1 (498 aa).

The protein belongs to the ATPase alpha/beta chains family. As to quaternary structure, F-type ATPases have 2 components, CF(1) - the catalytic core - and CF(0) - the membrane proton channel. CF(1) has five subunits: alpha(3), beta(3), gamma(1), delta(1), epsilon(1). CF(0) has three main subunits: a(1), b(2) and c(9-12). The alpha and beta chains form an alternating ring which encloses part of the gamma chain. CF(1) is attached to CF(0) by a central stalk formed by the gamma and epsilon chains, while a peripheral stalk is formed by the delta and b chains.

It localises to the cell membrane. The catalysed reaction is ATP + H2O + 4 H(+)(in) = ADP + phosphate + 5 H(+)(out). Produces ATP from ADP in the presence of a proton gradient across the membrane. The alpha chain is a regulatory subunit. This Listeria monocytogenes serotype 4b (strain F2365) protein is ATP synthase subunit alpha 1.